The following is a 119-amino-acid chain: EF-hand calcium-binding domain-containing protein 2 (119 aa).

Positions Met1–Ser22 are cleaved as a signal peptide. Positions Val82–Leu117 constitute an EF-hand domain. Asp95, Asp97, Asp99, and Glu106 together coordinate Ca(2+).

In terms of tissue distribution, component of the acid-soluble organic matrix of calcified layers of the shell (at protein level).

The protein resides in the secreted. In Lottia gigantea (Giant owl limpet), this protein is EF-hand calcium-binding domain-containing protein 2.